The primary structure comprises 156 residues: Phosphopantetheine adenylyltransferase (156 aa).

Position 9 (serine 9) interacts with substrate. ATP-binding positions include serine 9–phenylalanine 10 and histidine 17. Substrate contacts are provided by lysine 41, isoleucine 74, and lysine 88. Residues glycine 89–arginine 91, glutamate 99, and leucine 123–serine 129 each bind ATP.

It belongs to the bacterial CoaD family. As to quaternary structure, homohexamer. Mg(2+) is required as a cofactor.

It localises to the cytoplasm. The enzyme catalyses (R)-4'-phosphopantetheine + ATP + H(+) = 3'-dephospho-CoA + diphosphate. It functions in the pathway cofactor biosynthesis; coenzyme A biosynthesis; CoA from (R)-pantothenate: step 4/5. Functionally, reversibly transfers an adenylyl group from ATP to 4'-phosphopantetheine, yielding dephospho-CoA (dPCoA) and pyrophosphate. In Kocuria rhizophila (strain ATCC 9341 / DSM 348 / NBRC 103217 / DC2201), this protein is Phosphopantetheine adenylyltransferase.